Here is a 390-residue protein sequence, read N- to C-terminus: MKRQALAAMIASLFALAACGGEPAAQAPAETPAAAAEAASSAAQTAAETPSGELPVIDAVTTHAPEVPPAIDRDYPAKVRVKMETVEKTMTMEDGVEYRYWTFDGDVPGRMIRVREGDTVEVEFSNNPSSTVPHNVDFHAATGQGGGAAATFTAPGRTSTFSFKALQPGLYIYHCAVAPVGMHIANGMYGLILVEPKEGLPKVDKEFYIVQGDFYTKGKKGAQGLQPFDMDKAVAEQPEYVVFNGHVGAIAGDNALKAKAGETVRMYVGNGGPNLVSSFHVIGEIFDKVYVEGGKLINENVQSTIVPAGGSAIVEFKVDIPGSYTLVDHSIFRAFNKGALGQLKVEGAENPEIMTQKLSDTAYAGNGAAPAASAPAASAPAASASEKSVY.

The signal sequence occupies residues 1-18 (MKRQALAAMIASLFALAA). Cys-19 is lipidated: N-palmitoyl cysteine. Residue Cys-19 is the site of S-diacylglycerol cysteine attachment. The interval 30-51 (ETPAAAAEAASSAAQTAAETPS) is disordered. Plastocyanin-like domains lie at 101 to 195 (WTFD…ILVE) and 245 to 346 (GHVG…LKVE). His-134, His-139, His-174, Cys-175, His-183, and Met-188 together coordinate Cu cation. Residue His-139 coordinates substrate. His-280 is a substrate binding site. Position 329 (His-329) interacts with Cu cation. Residues 367–390 (GAAPAASAPAASAPAASASEKSVY) form a disordered region. The segment covering 368 to 390 (AAPAASAPAASAPAASASEKSVY) has biased composition (low complexity). 3 consecutive repeat copies span residues 371–375 (AASAP), 376–380 (AASAP), and 381–385 (AASAS). The segment at 371–385 (AASAPAASAPAASAS) is 3 X 5 AA tandem repeats of A-A-S-A-P.

It belongs to the multicopper oxidase family. Homotrimer. Cu(+) serves as cofactor. The cofactor is Cu(2+).

The protein resides in the cell outer membrane. The catalysed reaction is nitric oxide + Fe(III)-[cytochrome c] + H2O = Fe(II)-[cytochrome c] + nitrite + 2 H(+). In terms of biological role, catalyzes the reduction of nitrite to nitric oxide (NO). It could be essential for growth and survival in oxygen-depleted environments. This chain is Copper-containing nitrite reductase (aniA), found in Neisseria meningitidis serogroup B (strain ATCC BAA-335 / MC58).